The chain runs to 2073 residues: Dedicator of cytokinesis protein 11 (2073 aa).

Position 12 is a phosphoserine (S12). Residue T16 is modified to Phosphothreonine. Phosphoserine occurs at positions 23 and 161. Residues 165 to 272 (GVIKQGWLHK…WLIMLKKIIQ (108 aa)) form the PH domain. Position 248 is a phosphotyrosine (Y248). Phosphoserine is present on residues S306 and S445. Residues 640–818 (KNHLYVYPLQ…PLLKIKTHLE (179 aa)) form the C2 DOCK-type domain. The segment at 1227-1267 (QNGHGIKREDSRGSLIPEGATGFPDPGSTSENTRQSSSRSS) is disordered. 2 positions are modified to phosphoserine: S1237 and S1240. A compositionally biased stretch (low complexity) spans 1254–1267 (STSENTRQSSSRSS). Residues 1609-2036 (KSYASTPELR…LSDIIHEQIL (428 aa)) form the DOCKER domain.

This sequence belongs to the DOCK family. Interacts with CDC42. Expressed in spleen, thymus, mesenteric lymph nodes (MLN), bone marrow and peripheral blood lymphocytes. Enriched in B-cells from germinal centers. Expressed in B-, T- and dendritic cells as well as Purkinje cells.

Guanine nucleotide-exchange factor (GEF) that activates CDC42 by exchanging bound GDP for free GTP. Required for marginal zone (MZ) B-cell development, is associated with early bone marrow B-cell development, MZ B-cell formation, MZ B-cell number and marginal metallophilic macrophages morphology. Facilitates filopodia formation through the activation of CDC42. The protein is Dedicator of cytokinesis protein 11 of Mus musculus (Mouse).